A 151-amino-acid chain; its full sequence is MKYQQLENLESGWKWKYLVKKHREGELITCYIEASAAKEAVDLLLTLENEPVHVNSWIEKHINPALLNRMKQTIRARRKRHFNAEHQHTRKKSIDLEFMVWQRLAGLAQRRGKTLSETVVQLIEDAEHKEKYANQMSTLKNDLQAMLGKKE.

This sequence belongs to the MatP family. In terms of assembly, homodimer.

It localises to the cytoplasm. In terms of biological role, required for spatial organization of the terminus region of the chromosome (Ter macrodomain) during the cell cycle. Prevents early segregation of duplicated Ter macrodomains during cell division. Binds specifically to matS, which is a 13 bp signature motif repeated within the Ter macrodomain. The polypeptide is Macrodomain Ter protein (Enterobacter sp. (strain 638)).